A 571-amino-acid chain; its full sequence is Proline--tRNA ligase (571 aa).

This sequence belongs to the class-II aminoacyl-tRNA synthetase family. ProS type 1 subfamily. Homodimer.

Its subcellular location is the cytoplasm. It carries out the reaction tRNA(Pro) + L-proline + ATP = L-prolyl-tRNA(Pro) + AMP + diphosphate. Functionally, catalyzes the attachment of proline to tRNA(Pro) in a two-step reaction: proline is first activated by ATP to form Pro-AMP and then transferred to the acceptor end of tRNA(Pro). As ProRS can inadvertently accommodate and process non-cognate amino acids such as alanine and cysteine, to avoid such errors it has two additional distinct editing activities against alanine. One activity is designated as 'pretransfer' editing and involves the tRNA(Pro)-independent hydrolysis of activated Ala-AMP. The other activity is designated 'posttransfer' editing and involves deacylation of mischarged Ala-tRNA(Pro). The misacylated Cys-tRNA(Pro) is not edited by ProRS. The protein is Proline--tRNA ligase of Thermodesulfovibrio yellowstonii (strain ATCC 51303 / DSM 11347 / YP87).